The primary structure comprises 59 residues: Small ribosomal subunit protein bS21 (59 aa).

Positions 36 to 59 are disordered; that stretch reads EHYEKPSVKRKKKAEAAKRNKSKF. Over residues 43-59 the composition is skewed to basic residues; that stretch reads VKRKKKAEAAKRNKSKF.

Belongs to the bacterial ribosomal protein bS21 family.

The polypeptide is Small ribosomal subunit protein bS21 (Alkaliphilus oremlandii (strain OhILAs) (Clostridium oremlandii (strain OhILAs))).